We begin with the raw amino-acid sequence, 228 residues long: 5'-methylthioadenosine/S-adenosylhomocysteine nucleosidase (228 aa).

Glutamate 11 (proton acceptor) is an active-site residue. Residues glycine 77, isoleucine 151, and methionine 172–glutamate 173 each bind substrate. Aspartate 196 (proton donor) is an active-site residue.

Belongs to the PNP/UDP phosphorylase family. MtnN subfamily.

It catalyses the reaction S-adenosyl-L-homocysteine + H2O = S-(5-deoxy-D-ribos-5-yl)-L-homocysteine + adenine. The enzyme catalyses S-methyl-5'-thioadenosine + H2O = 5-(methylsulfanyl)-D-ribose + adenine. The catalysed reaction is 5'-deoxyadenosine + H2O = 5-deoxy-D-ribose + adenine. It participates in amino-acid biosynthesis; L-methionine biosynthesis via salvage pathway; S-methyl-5-thio-alpha-D-ribose 1-phosphate from S-methyl-5'-thioadenosine (hydrolase route): step 1/2. Its function is as follows. Catalyzes the irreversible cleavage of the glycosidic bond in both 5'-methylthioadenosine (MTA) and S-adenosylhomocysteine (SAH/AdoHcy) to adenine and the corresponding thioribose, 5'-methylthioribose and S-ribosylhomocysteine, respectively. Also cleaves 5'-deoxyadenosine, a toxic by-product of radical S-adenosylmethionine (SAM) enzymes, into 5-deoxyribose and adenine. This chain is 5'-methylthioadenosine/S-adenosylhomocysteine nucleosidase, found in Staphylococcus aureus (strain JH1).